A 456-amino-acid chain; its full sequence is Glycosyl hydrolase family 109 protein 2 (456 aa).

Positions 1-33 (MSGFDRRSFLKASMVTAAATALAACASSERATG) form a signal peptide, tat-type signal. NAD(+)-binding positions include 63 to 64 (ER), Asp-85, 134 to 137 (WAWH), 154 to 155 (EV), and Asn-183. Substrate is bound by residues Tyr-212, Arg-231, 243-246 (YPTH), and Tyr-325. Residue Tyr-243 participates in NAD(+) binding.

Belongs to the Gfo/Idh/MocA family. Glycosyl hydrolase 109 subfamily. NAD(+) serves as cofactor. Predicted to be exported by the Tat system. The position of the signal peptide cleavage has not been experimentally proven.

In terms of biological role, glycosidase. The protein is Glycosyl hydrolase family 109 protein 2 of Shewanella sp. (strain MR-4).